A 44-amino-acid polypeptide reads, in one-letter code: Metallothionein-4 (44 aa).

The protein belongs to the metallothionein superfamily. Type 5 family.

In terms of biological role, this protein binds cations of several transition elements. Thought to be involved in metal ion homeostasis. The protein is Metallothionein-4 (MtnD) of Drosophila melanogaster (Fruit fly).